The following is a 231-amino-acid chain: tRNA (guanine-N(1)-)-methyltransferase (231 aa).

Residues glycine 114 and isoleucine 134 to leucine 139 each bind S-adenosyl-L-methionine.

Belongs to the RNA methyltransferase TrmD family. Homodimer.

It localises to the cytoplasm. It catalyses the reaction guanosine(37) in tRNA + S-adenosyl-L-methionine = N(1)-methylguanosine(37) in tRNA + S-adenosyl-L-homocysteine + H(+). Its function is as follows. Specifically methylates guanosine-37 in various tRNAs. This chain is tRNA (guanine-N(1)-)-methyltransferase, found in Clostridioides difficile (strain 630) (Peptoclostridium difficile).